The sequence spans 381 residues: MISLSLLYRILTLPIILVGTTILYFTIGTNFPHDELRHNLLSTLFCSSMLHLSKGLTVKDVRIFFHDSIGSTLLKNRKKLNSENELPNYGEKFTHKYDNQDMPDSVWLAKVNGMTKSDPIILHLHGGMMALPYDKVILVGLSNLYKLFSTTMNRPPSILLVDYSLVSQGYTYPKQVRECLNVYQVLISKGFRNITVLGESAGGTLILSFLYQISELSKLNKVVWPKGVALISPWLDLTNAKKIGSYRANDGLDVICYETLNRFGKAYVNNEESLFTSSVVNINMNCDISIWSKIPPIQDGKVLVLFGENEVFRDEILSWTSKIGLLKAYPNRVLMDKQGIHIGLFLEESPSIGPGMTNLDIWKKKFSVNSLYTFLRETFEE.

The Cytoplasmic portion of the chain corresponds to M1–R9. A helical; Signal-anchor for type II membrane protein membrane pass occupies residues I10–N30. At F31–E381 the chain is on the lumenal side. The Involved in the stabilization of the negatively charged intermediate by the formation of the oxyanion hole motif lies at H125–G127. N-linked (GlcNAc...) asparagine glycosylation occurs at N193. S200 is an active-site residue.

Belongs to the 'GDXG' lipolytic enzyme family.

It localises to the cytoplasm. Its subcellular location is the endoplasmic reticulum membrane. Functionally, required for the deacetylation of acetylated sterols. Has a role in meiosis. The protein is Putative steryl acetyl hydrolase mug81 (mug180) of Schizosaccharomyces pombe (strain 972 / ATCC 24843) (Fission yeast).